We begin with the raw amino-acid sequence, 255 residues long: tRNA uridine(34) hydroxylase (255 aa).

Positions Ala125–Ser219 constitute a Rhodanese domain. Cys179 acts as the Cysteine persulfide intermediate in catalysis.

It belongs to the TrhO family.

It carries out the reaction uridine(34) in tRNA + AH2 + O2 = 5-hydroxyuridine(34) in tRNA + A + H2O. Catalyzes oxygen-dependent 5-hydroxyuridine (ho5U) modification at position 34 in tRNAs. The sequence is that of tRNA uridine(34) hydroxylase from Nitrobacter hamburgensis (strain DSM 10229 / NCIMB 13809 / X14).